The chain runs to 97 residues: Glutamyl-tRNA(Gln) amidotransferase subunit C (97 aa).

It belongs to the GatC family. As to quaternary structure, heterotrimer of A, B and C subunits.

The catalysed reaction is L-glutamyl-tRNA(Gln) + L-glutamine + ATP + H2O = L-glutaminyl-tRNA(Gln) + L-glutamate + ADP + phosphate + H(+). It carries out the reaction L-aspartyl-tRNA(Asn) + L-glutamine + ATP + H2O = L-asparaginyl-tRNA(Asn) + L-glutamate + ADP + phosphate + 2 H(+). Allows the formation of correctly charged Asn-tRNA(Asn) or Gln-tRNA(Gln) through the transamidation of misacylated Asp-tRNA(Asn) or Glu-tRNA(Gln) in organisms which lack either or both of asparaginyl-tRNA or glutaminyl-tRNA synthetases. The reaction takes place in the presence of glutamine and ATP through an activated phospho-Asp-tRNA(Asn) or phospho-Glu-tRNA(Gln). The polypeptide is Glutamyl-tRNA(Gln) amidotransferase subunit C (Saccharolobus solfataricus (strain ATCC 35092 / DSM 1617 / JCM 11322 / P2) (Sulfolobus solfataricus)).